Reading from the N-terminus, the 132-residue chain is Small ribosomal subunit protein uS8 (132 aa).

Belongs to the universal ribosomal protein uS8 family. Part of the 30S ribosomal subunit. Contacts proteins S5 and S12.

Its function is as follows. One of the primary rRNA binding proteins, it binds directly to 16S rRNA central domain where it helps coordinate assembly of the platform of the 30S subunit. The polypeptide is Small ribosomal subunit protein uS8 (Staphylococcus epidermidis (strain ATCC 35984 / DSM 28319 / BCRC 17069 / CCUG 31568 / BM 3577 / RP62A)).